The sequence spans 434 residues: Bcl-2-like protein 13 (434 aa).

Residues 14 to 30 carry the BH4 motif; the sequence is ETKYVVLSYLGLLSQEK. At serine 35 the chain carries Phosphoserine. The BH3 motif lies at 97-113; it reads IEDCLAHLGERVSQDLK. The BH1 signature appears at 144–154; the sequence is ASGWNKLLVPL. The BH2 signature appears at 190–203; the sequence is FIIQQGGWGSVFSL. Residues 224–245 form a disordered region; that stretch reads LPSDNSGQVSPPESPTVTTSWQ. A compositionally biased stretch (polar residues) spans 226–245; that stretch reads SDNSGQVSPPESPTVTTSWQ. The A repeat unit spans residues 243–253; it reads SWQSESLPVSL. 7 positions are modified to phosphoserine: serine 256, serine 258, serine 300, serine 343, serine 347, serine 377, and serine 387. An A; approximate repeat occupies 258 to 268; sequence SWHTESLPVSL. The tract at residues 282–303 is disordered; it reads EVKSLDSSGAGEKSENNSSNSD. Residues 363-398 form a disordered region; sequence RPEAVERAEGAAQLSEERAGSRKKSHTGEAAAVRGA. A compositionally biased stretch (basic and acidic residues) spans 365–382; sequence EAVERAEGAAQLSEERAG. The chain crosses the membrane as a helical span at residues 409 to 429; that stretch reads VLLFGGAAAVAILAVAVGVAL.

This sequence belongs to the Bcl-2 family. In terms of assembly, monomer.

It localises to the mitochondrion membrane. In terms of biological role, may promote the activation of caspase-3 and apoptosis. In Mus musculus (Mouse), this protein is Bcl-2-like protein 13 (Bcl2l13).